Here is a 549-residue protein sequence, read N- to C-terminus: Eukaryotic translation initiation factor 3 subunit D (549 aa).

The tract at residues 101–130 is disordered; sequence QSYQRGRARGQRGRGARGARTPGGMTTLNK. A compositionally biased stretch (basic residues) spans 106 to 117; that stretch reads GRARGQRGRGAR. Positions 277 to 291 are RNA gate; sequence EFDLLTVNETSVEPP. The tract at residues 521 to 549 is disordered; sequence ESDASEESGDEQADTPFAPLYSYGNSKRV. Positions 523 to 533 are enriched in acidic residues; it reads DASEESGDEQA.

The protein belongs to the eIF-3 subunit D family. In terms of assembly, component of the eukaryotic translation initiation factor 3 (eIF-3) complex.

The protein resides in the cytoplasm. Its function is as follows. mRNA cap-binding component of the eukaryotic translation initiation factor 3 (eIF-3) complex, which is involved in protein synthesis of a specialized repertoire of mRNAs and, together with other initiation factors, stimulates binding of mRNA and methionyl-tRNAi to the 40S ribosome. The eIF-3 complex specifically targets and initiates translation of a subset of mRNAs involved in cell proliferation. In the eIF-3 complex, eif3d specifically recognizes and binds the 7-methylguanosine cap of a subset of mRNAs. In Bombyx mori (Silk moth), this protein is Eukaryotic translation initiation factor 3 subunit D.